Reading from the N-terminus, the 347-residue chain is NADH-ubiquinone oxidoreductase chain 2 (347 aa).

Transmembrane regions (helical) follow at residues 3 to 23, 25 to 45, 59 to 79, 93 to 115, 150 to 170, 178 to 198, 200 to 220, 240 to 260, 274 to 294, and 326 to 346; these read PLAL…TMMS, HWLT…PILM, YFMT…INLM, VASN…HFWV, NTNL…WGGL, ILAY…PFNP, LTLL…MILA, MTIM…LSGF, NSII…YFYM, and LPTL…ISML.

Belongs to the complex I subunit 2 family. As to quaternary structure, core subunit of respiratory chain NADH dehydrogenase (Complex I) which is composed of 45 different subunits. Interacts with TMEM242.

Its subcellular location is the mitochondrion inner membrane. The enzyme catalyses a ubiquinone + NADH + 5 H(+)(in) = a ubiquinol + NAD(+) + 4 H(+)(out). In terms of biological role, core subunit of the mitochondrial membrane respiratory chain NADH dehydrogenase (Complex I) which catalyzes electron transfer from NADH through the respiratory chain, using ubiquinone as an electron acceptor. Essential for the catalytic activity and assembly of complex I. The sequence is that of NADH-ubiquinone oxidoreductase chain 2 from Mammuthus primigenius (Siberian woolly mammoth).